Consider the following 657-residue polypeptide: Protein mono-ADP-ribosyltransferase TIPARP (657 aa).

Residues 1 to 10 are compositionally biased toward acidic residues; the sequence is MEVETTEPEP. The segment at 1-22 is disordered; that stretch reads MEVETTEPEPDCVVQPPSPSDD. Cysteine 39 carries the post-translational modification ADP-ribosylcysteine. Residues 41–48 carry the Nuclear localization signal motif; it reads KKKQEQKR. The interval 121-154 is disordered; the sequence is QLPEAHPSTDAPEQGVPIQDHSFPPETISGTVAD. Residues 238 to 265 form a C3H1-type zinc finger; it reads ENGIEICMDFLQGTCIYGRDCLKHHTVL. A WWE domain is found at 333–411; that stretch reads STPPCSNSNS…RRPLFRSCFI (79 aa). The PARP catalytic domain occupies 449 to 657; the sequence is YPETWVYMHP…YEEVSNTVSI (209 aa).

Belongs to the ARTD/PARP family. In terms of assembly, interacts with AHR. In terms of processing, auto-mono-ADP-ribosylated. Ubiquitously expressed.

The protein localises to the nucleus. It carries out the reaction L-aspartyl-[protein] + NAD(+) = 4-O-(ADP-D-ribosyl)-L-aspartyl-[protein] + nicotinamide. The catalysed reaction is L-glutamyl-[protein] + NAD(+) = 5-O-(ADP-D-ribosyl)-L-glutamyl-[protein] + nicotinamide. The enzyme catalyses L-cysteinyl-[protein] + NAD(+) = S-(ADP-D-ribosyl)-L-cysteinyl-[protein] + nicotinamide + H(+). In terms of biological role, ADP-ribosyltransferase that mediates mono-ADP-ribosylation of glutamate, aspartate and cysteine residues on target proteins. Acts as a negative regulator of AHR by mediating mono-ADP-ribosylation of AHR, leading to inhibit transcription activator activity of AHR. This is Protein mono-ADP-ribosyltransferase TIPARP from Mus musculus (Mouse).